The primary structure comprises 103 residues: Large ribosomal subunit protein bL21 (103 aa).

This sequence belongs to the bacterial ribosomal protein bL21 family. Part of the 50S ribosomal subunit. Contacts protein L20.

This protein binds to 23S rRNA in the presence of protein L20. This is Large ribosomal subunit protein bL21 from Yersinia enterocolitica serotype O:8 / biotype 1B (strain NCTC 13174 / 8081).